The primary structure comprises 500 residues: Intracellular exo-alpha-(1-&gt;5)-L-arabinofuranosidase 1 (500 aa).

Positions 27, 72, and 172 each coordinate alpha-L-arabinofuranose. The active-site Proton donor/acceptor is glutamate 173. Residues tyrosine 244, glutamate 292, and glutamine 349 each contribute to the alpha-L-arabinofuranose site. The Nucleophile role is filled by glutamate 292.

It belongs to the glycosyl hydrolase 51 family. Homohexamer; trimer of dimers.

The protein resides in the cytoplasm. The enzyme catalyses Hydrolysis of terminal non-reducing alpha-L-arabinofuranoside residues in alpha-L-arabinosides.. It catalyses the reaction (20S)-ginsenoside Rc + H2O = L-arabinofuranose + (20S)-ginsenoside Rd. The protein operates within glycan metabolism; L-arabinan degradation. Its activity is regulated as follows. At a concentration of 5 mM, K(+), Cu(2+) and Ni(2+) exhibit inhibitory effects on the activity. Additionally, the chemical reagent SDS also displays a certain degree of inhibition. Enzymatic activity is largely unaffected by product feedback inhibition. Its function is as follows. Involved in the degradation of arabinan and is a key enzyme in the complete degradation of the plant cell wall. Catalyzes the cleavage of terminal alpha-(1-&gt;5)-arabinofuranosyl bonds in different hemicellulosic homopolysaccharides (branched and debranched arabinans). It acts preferentially on arabinotriose, arabinobiose and linear alpha-(1-&gt;5)-L-arabinan, and is much less effective on branched sugar beet arabinan. When expressed in E.coli, the recombinant enyzme can hydrolyze, with relatively low catalytic efficiency, the terminal alpha-L-arabinofuranoside at the C20 position of ginsenoside Rc to produce ginsenoside Rd, a rare ginsenoside that exhibits diverse and powerful pharmacological activities. The protein is Intracellular exo-alpha-(1-&gt;5)-L-arabinofuranosidase 1 of Bacillus subtilis (strain 168).